Consider the following 646-residue polypeptide: Vitamin K-dependent protein S (646 aa).

A propeptide spanning residues 1–12 is cleaved from the precursor; that stretch reads GHASQVLVRKRR. The 46-residue stretch at 13–58 folds into the Gla domain; it reads ANSMLEETKKGNLERECIEELCNKEEAREVFENDPETDYFYPKYLG. 4-carboxyglutamate is present on residues E18, E19, E26, E28, E31, E32, E37, E38, E41, E44, and E48. The cysteines at positions 29 and 34 are disulfide-linked. Positions 59-87 are thrombin-sensitive; it reads CLGSFRAKLFTATRRSANGYPDLRSCVNA. An EGF-like 1 domain is found at 88-126; sequence IPDQCNPLPCSEEGYLNCKDGQATFTCICKPGWQGEKCE. 13 disulfides stabilise this stretch: C92–C105, C97–C114, C116–C125, C132–C146, C142–C155, C157–C170, C176–C188, C183–C197, C199–C212, C218–C227, C223–C236, C238–C253, and C420–C446. Residue D107 is modified to (3R)-3-hydroxyaspartate. In terms of domain architecture, EGF-like 2; calcium-binding spans 128 to 171; that stretch reads DINECKDPTNINGGCSQICDNTAGSYHCSCKSGFVMLANEKDCK. Residues 172–213 form the EGF-like 3; calcium-binding domain; the sequence is DMDECSVKPSVCGTAVCKNTPGDFECECSEGYRYNPTAKSCE. The region spanning 214-254 is the EGF-like 4; calcium-binding domain; the sequence is DIDECSENMCAQLCVNYPGGYSCYCDGKKGFKLAQDKKSCE. Laminin G-like domains are found at residues 270–446 and 455–636; these read LLYL…KKHC and YYPG…AHSC. N-linked (GlcNAc...) asparagine glycans are attached at residues N470 and N480. The cysteines at positions 609 and 636 are disulfide-linked.

Interacts with C4b-binding protein, a regulator of the complex system. In rabbit plasma however, protein S appears to be present only in free form. In terms of processing, the iron and 2-oxoglutarate dependent 3-hydroxylation of aspartate and asparagine is (R) stereospecific within EGF domains. Plasma.

Its subcellular location is the secreted. In terms of biological role, anticoagulant plasma protein; it is a cofactor to activated protein C in the degradation of coagulation factors Va and VIIIa. It helps to prevent coagulation and stimulating fibrinolysis. This is Vitamin K-dependent protein S (PROS1) from Oryctolagus cuniculus (Rabbit).